Consider the following 474-residue polypeptide: Glycogen synthase (474 aa).

Lysine 12 is an ADP-alpha-D-glucose binding site.

This sequence belongs to the glycosyltransferase 1 family. Bacterial/plant glycogen synthase subfamily.

The catalysed reaction is [(1-&gt;4)-alpha-D-glucosyl](n) + ADP-alpha-D-glucose = [(1-&gt;4)-alpha-D-glucosyl](n+1) + ADP + H(+). Its pathway is glycan biosynthesis; glycogen biosynthesis. Functionally, synthesizes alpha-1,4-glucan chains using ADP-glucose. This chain is Glycogen synthase, found in Xanthomonas axonopodis pv. citri (strain 306).